We begin with the raw amino-acid sequence, 214 residues long: Transcription factor MYB24 (214 aa).

2 consecutive HTH myb-type domains span residues 14-66 (DAEV…LNYL) and 67-121 (RPDV…QKYI). 2 consecutive DNA-binding regions (H-T-H motif) follow at residues 42-66 (WNSLAKSAGLKRTGKSCRLRWLNYL) and 94-117 (WSKIAKHLPGRTDNEIKNFWRTKI).

In terms of assembly, interacts (via N-terminus) with TIFY10A/JAZ1, TIFY5A/JAZ8 AND TIFY3A/JAZ11. Expressed specifically in flowers. Expressed in all four whorls of the flower and in the vascular tissue of stamen filament and sepals. Detected in male and female gametophytes, especially in microspores and ovules. Weakly expressed in petals and the upper part of pistils.

It localises to the nucleus. Transcription factor acting redundantly with MYB21 and MYB57 to control stamen filament elongation in the late developed flowers. Contributes with MYB21 to induction of MYB108 by jasmonate. Repressed at the transcript levels by DELLA proteins. This is Transcription factor MYB24 (MYB24) from Arabidopsis thaliana (Mouse-ear cress).